The primary structure comprises 141 residues: Putative pre-16S rRNA nuclease (141 aa).

Belongs to the YqgF nuclease family.

The protein localises to the cytoplasm. Functionally, could be a nuclease involved in processing of the 5'-end of pre-16S rRNA. The chain is Putative pre-16S rRNA nuclease from Acetivibrio thermocellus (strain ATCC 27405 / DSM 1237 / JCM 9322 / NBRC 103400 / NCIMB 10682 / NRRL B-4536 / VPI 7372) (Clostridium thermocellum).